We begin with the raw amino-acid sequence, 378 residues long: Ribosomal RNA large subunit methyltransferase G (378 aa).

Belongs to the methyltransferase superfamily. RlmG family.

Its subcellular location is the cytoplasm. It catalyses the reaction guanosine(1835) in 23S rRNA + S-adenosyl-L-methionine = N(2)-methylguanosine(1835) in 23S rRNA + S-adenosyl-L-homocysteine + H(+). Its function is as follows. Specifically methylates the guanine in position 1835 (m2G1835) of 23S rRNA. The chain is Ribosomal RNA large subunit methyltransferase G from Shigella flexneri serotype 5b (strain 8401).